Reading from the N-terminus, the 237-residue chain is Protein YIPF4 (237 aa).

The Cytoplasmic portion of the chain corresponds to 1-106; the sequence is MQFSPTNGDF…FNRQVVRDNP (106 aa). A helical membrane pass occupies residues 107–127; sequence DFWGPLAVVLLFSMISIYGQF. The Lumenal segment spans residues 128 to 131; that stretch reads RVVS. The chain crosses the membrane as a helical span at residues 132 to 152; the sequence is WIITIWIFGSLTIFLLARVLG. Residues 153–160 lie on the Cytoplasmic side of the membrane; that stretch reads GEVSYGQV. The chain crosses the membrane as a helical span at residues 161–181; sequence LGVIGYSLLPLIVIAPLLLVI. The Lumenal portion of the chain corresponds to 182–188; sequence GGFEVVS. Residues 189 to 209 traverse the membrane as a helical segment; the sequence is TLIKLFGVFWAAYSAASLLVG. Residues 210–216 are Cytoplasmic-facing; the sequence is DEFKTKK. A helical transmembrane segment spans residues 217-237; the sequence is PLLIYPIFLLYIYFLSLYTGV.

The protein belongs to the YIP1 family.

The protein localises to the golgi apparatus. Its subcellular location is the cis-Golgi network membrane. Involved in the maintenance of the Golgi structure. This Danio rerio (Zebrafish) protein is Protein YIPF4 (yipf4).